A 62-amino-acid chain; its full sequence is Large ribosomal subunit protein uL29 (62 aa).

Belongs to the universal ribosomal protein uL29 family.

In Trichlorobacter lovleyi (strain ATCC BAA-1151 / DSM 17278 / SZ) (Geobacter lovleyi), this protein is Large ribosomal subunit protein uL29.